We begin with the raw amino-acid sequence, 118 residues long: MARIKGGLNAKKKHNKVLKLAKGYRGARSKQYRVAKQSVMRALTSAFAGRKERKRQFRQLWIARINAAARMNGLSYSKFMYGLKLAEVSVNRKMLAELAVNDAEGFKALVEVAKSKLA.

It belongs to the bacterial ribosomal protein bL20 family.

In terms of biological role, binds directly to 23S ribosomal RNA and is necessary for the in vitro assembly process of the 50S ribosomal subunit. It is not involved in the protein synthesizing functions of that subunit. The polypeptide is Large ribosomal subunit protein bL20 (Lachnoclostridium phytofermentans (strain ATCC 700394 / DSM 18823 / ISDg) (Clostridium phytofermentans)).